We begin with the raw amino-acid sequence, 77 residues long: U8-lycotoxin-Ls1f (77 aa).

An N-terminal signal peptide occupies residues 1 to 20 (MKLIIFTGLVLFAIVSLIEV). Residues 21 to 26 (QADNER) constitute a propeptide that is removed on maturation.

This sequence belongs to the neurotoxin 19 (CSTX) family. 08 (U8-Lctx) subfamily. Contains 4 disulfide bonds. Expressed by the venom gland.

It is found in the secreted. The polypeptide is U8-lycotoxin-Ls1f (Lycosa singoriensis (Wolf spider)).